We begin with the raw amino-acid sequence, 161 residues long: Peptidyl-prolyl cis-trans isomerase-like 3 (161 aa).

Residue serine 2 is modified to N-acetylserine. Residues 2–154 (SVTLHTDVGD…NDVHIKDITI (153 aa)) form the PPIase cyclophilin-type domain. At arginine 61 the chain carries Omega-N-methylarginine.

This sequence belongs to the cyclophilin-type PPIase family. PPIL3 subfamily. Identified in the spliceosome C complex.

It carries out the reaction [protein]-peptidylproline (omega=180) = [protein]-peptidylproline (omega=0). Its function is as follows. PPIases accelerate the folding of proteins. It catalyzes the cis-trans isomerization of proline imidic peptide bonds in oligopeptides. May be involved in pre-mRNA splicing. This is Peptidyl-prolyl cis-trans isomerase-like 3 (Ppil3) from Mus musculus (Mouse).